A 146-amino-acid chain; its full sequence is NADH-ubiquinone oxidoreductase chain 6 (146 aa).

4 helical membrane passes run 10–30, 41–61, 75–95, and 124–144; these read LTAI…ILFV, FVLM…MLFL, GTIT…LDIT, and AMLL…AMSI.

The protein belongs to the complex I subunit 6 family.

Its subcellular location is the mitochondrion membrane. The enzyme catalyses a ubiquinone + NADH + 5 H(+)(in) = a ubiquinol + NAD(+) + 4 H(+)(out). In terms of biological role, core subunit of the mitochondrial membrane respiratory chain NADH dehydrogenase (Complex I) that is believed to belong to the minimal assembly required for catalysis. Complex I functions in the transfer of electrons from NADH to the respiratory chain. The immediate electron acceptor for the enzyme is believed to be ubiquinone. In Debaryomyces hansenii (strain ATCC 36239 / CBS 767 / BCRC 21394 / JCM 1990 / NBRC 0083 / IGC 2968) (Yeast), this protein is NADH-ubiquinone oxidoreductase chain 6 (ND6).